We begin with the raw amino-acid sequence, 214 residues long: Large ribosomal subunit protein uL3 (214 aa).

Positions 130–151 (FSSNRASHGNSRSHNTPGSIGQ) are enriched in polar residues. The disordered stretch occupies residues 130–163 (FSSNRASHGNSRSHNTPGSIGQAQDPGRVFPGKR). Glutamine 153 bears the N5-methylglutamine mark.

This sequence belongs to the universal ribosomal protein uL3 family. Part of the 50S ribosomal subunit. Forms a cluster with proteins L14 and L19. In terms of processing, methylated by PrmB.

Functionally, one of the primary rRNA binding proteins, it binds directly near the 3'-end of the 23S rRNA, where it nucleates assembly of the 50S subunit. This Chromobacterium violaceum (strain ATCC 12472 / DSM 30191 / JCM 1249 / CCUG 213 / NBRC 12614 / NCIMB 9131 / NCTC 9757 / MK) protein is Large ribosomal subunit protein uL3.